The following is a 1242-amino-acid chain: Membrane-associated phosphatidylinositol transfer protein 1 (1242 aa).

A phosphothreonine mark is found at Thr-59, Thr-282, and Thr-287. The interval 259–330 (CNTGSEGPEA…HGGGVSPQSL (72 aa)) is disordered. The segment covering 272–282 (GKPSTETQPGT) has biased composition (polar residues). Over residues 299 to 319 (ASPDASFGKQWSSSSRSSYSS) the composition is skewed to low complexity. A phosphoserine mark is found at Ser-300, Ser-304, Ser-319, Ser-326, Ser-329, Ser-342, Ser-345, Ser-346, and Ser-373. Position 382 is a phosphoserine; by CDK1 (Ser-382). Residues 581-593 (AGTGSRGSSRRGS) are compositionally biased toward low complexity. The interval 581–678 (AGTGSRGSSR…PASSEAPDGP (98 aa)) is disordered. Ser-593, Ser-600, and Ser-621 each carry phosphoserine. Residues 643–656 (GSQNSLQVAPTVTS) show a composition bias toward polar residues. In terms of domain architecture, DDHD spans 684-878 (LDFKVSGFFL…VAFILRQVIE (195 aa)). Ser-894 is subject to Phosphoserine. The segment at 1207-1242 (RSRGPSQVDLEGPGTPPTTLARGKTRSISLKLDSEE) is disordered. Arg-1209 bears the Omega-N-methylarginine mark. Ser-1235 carries the phosphoserine modification.

It belongs to the PtdIns transfer protein family. PI transfer class IIA subfamily. As to quaternary structure, interacts with PIK4CA and VAPB. Interacts with PTK2B via its C-terminus. Interacts with RHOA. Has higher affinity for the inactive, GDP-bound form of RHOA. The CDK1-phosphorylated form interacts with PLK1. Post-translationally, phosphorylated on multiple sites by CDK1 at the onset of mitosis. Phosphorylation facilitates dissociation from the Golgi complex and is required for interaction with PLK1. Phosphorylated on threonine residues upon treatment with oleic acid. In terms of processing, phosphorylated on tyrosine residues by PTK2B.

It is found in the cytoplasm. Its subcellular location is the golgi apparatus. The protein localises to the golgi stack membrane. It localises to the endoplasmic reticulum membrane. The protein resides in the lipid droplet. It is found in the cleavage furrow. Its subcellular location is the midbody. The enzyme catalyses a 1,2-diacyl-sn-glycero-3-phospho-(1D-myo-inositol)(in) = a 1,2-diacyl-sn-glycero-3-phospho-(1D-myo-inositol)(out). Its function is as follows. Catalyzes the transfer of phosphatidylinositol (PI) between membranes. Binds PI, phosphatidylcholine (PC) and phosphatidic acid (PA) with the binding affinity order of PI &gt; PA &gt; PC. Regulates RHOA activity, and plays a role in cytoskeleton remodeling. Necessary for normal completion of cytokinesis. Plays a role in maintaining normal diacylglycerol levels in the Golgi apparatus. Necessary for maintaining the normal structure of the endoplasmic reticulum and the Golgi apparatus. Required for protein export from the endoplasmic reticulum and the Golgi. Binds calcium ions. In Rattus norvegicus (Rat), this protein is Membrane-associated phosphatidylinositol transfer protein 1 (Pitpnm1).